A 1234-amino-acid chain; its full sequence is DNA-directed RNA polymerase I subunit RPA2 (1234 aa).

The segment at 1119–1150 adopts a C4-type zinc-finger fold; sequence CRQCGSFLSTQPTVSPFIGKRKAVSTVRCRNC.

The protein belongs to the RNA polymerase beta chain family. Component of the RNA polymerase I (Pol I) complex consisting of 14 subunits.

Its subcellular location is the nucleus. It localises to the nucleolus. It catalyses the reaction RNA(n) + a ribonucleoside 5'-triphosphate = RNA(n+1) + diphosphate. In terms of biological role, DNA-dependent RNA polymerase catalyzes the transcription of DNA into RNA using the four ribonucleoside triphosphates as substrates. Second largest core component of RNA polymerase I which synthesizes ribosomal RNA precursors. Proposed to contribute to the polymerase catalytic activity and forms the polymerase active center together with the largest subunit. Pol I is composed of mobile elements and RPA2 is part of the core element with the central large cleft and probably a clamp element that moves to open and close the cleft. In Neurospora crassa (strain ATCC 24698 / 74-OR23-1A / CBS 708.71 / DSM 1257 / FGSC 987), this protein is DNA-directed RNA polymerase I subunit RPA2 (acr-2).